Reading from the N-terminus, the 762-residue chain is Hyperosmolality-gated Ca2+ permeable channel 2.2 (762 aa).

Helical transmembrane passes span 3–23 (VSALLTSAGINIAICVVLVSL), 90–110 (MVICSIRIFSIVAVVCLAFVL), 144–164 (LWVHCLSLYIISSAACALLYF), 354–374 (IATLVGAIAFMFVFLFPVTFV), 402–422 (VITGYLPSVILVLFFYTVPPL), 445–465 (KILYFTIWNVFFVNILSGSVI), 500–520 (GWAGLACEIMQPVGLIWNLIA), 557–577 (VIAPLILPFLLIYFFFAYLIY), 594–614 (QYWPVFHNTTIFSLILSQVIA), and 615–635 (LGFFGLKLSTVASGFTIPLIL).

This sequence belongs to the CSC1 (TC 1.A.17) family.

Its subcellular location is the membrane. Its function is as follows. Acts as an osmosensitive calcium-permeable cation channel. The polypeptide is Hyperosmolality-gated Ca2+ permeable channel 2.2 (Arabidopsis thaliana (Mouse-ear cress)).